A 557-amino-acid chain; its full sequence is DNA replication factor Cdt1 (557 aa).

A PIP-box K+4 motif motif is present at residues 1–25 (MAQSRVTDFYACRRPGLTTPRAKSI). The disordered stretch occupies residues 20–113 (PRAKSICLTP…VCPSPVKRTK (94 aa)). Thr28 carries the phosphothreonine; by MAPK8 modification. Ser30 is modified (phosphoserine). Positions 65 to 67 (RRL) match the Cyclin-binding motif motif. Residues 69-81 (LPGLDSCPSSLPE) show a composition bias toward low complexity. The segment covering 82 to 106 (PSSPAEPSPPADPSPPADPGSPVCP) has biased composition (pro residues). A Phosphoserine; by MAPK8 modification is found at Ser107. The interval 163–203 (PSTPDAKVPTEQPCVEKAPAYQRFHALAQPGLPGLVLPYKY) is interaction with GMNN. Phosphoserine is present on Ser392. Residues 397-427 (RSAEPGSPGTSTPPLPATPPATPPAASPSAL) are disordered. Over residues 407–422 (STPPLPATPPATPPAA) the composition is skewed to pro residues. Residues 463–557 (LERLPELARV…LAHHVHAEGL (95 aa)) are interaction with LRWD1.

It belongs to the Cdt1 family. Interacts with GMNN; the interaction inhibits the binding of the MCM complex to origins of replication. Interacts with MCM6. Interacts with CDC6; are mutually dependent on one another for loading MCM complexes onto chromatin. Interacts with PCNA. Interacts with LRWD1 during G1 phase and during mitosis. Interacts with NDC80 subunit of the NDC80 complex; leading to kinetochore localization. Interacts with KAT7. Interacts with ubiquitin-binding protein FAF1; the interaction is likely to promote CDT1 degradation. Post-translationally, two independent E3 ubiquitin ligase complexes, SCF(SKP2) and the DCX(DTL) complex, mediated CDT1 degradation in S phase. Ubiquitinated by the DCX(DTL) complex, in response to DNA damage, leading to its degradation. Ubiquitination by the DCX(DTL) complex is necessary to ensure proper cell cycle regulation and is PCNA-dependent: interacts with PCNA via its PIP-box, while the presence of the containing the 'K+4' motif in the PIP box, recruit the DCX(DTL) complex, leading to its degradation. Phosphorylation at Thr-28 by CDK2 targets CDT1 for ubiquitynation by SCF(SKP2) E3 ubiquitin ligase and subsequent degradation. The interaction with GMNN protects it against ubiquitination. Deubiquitinated by USP37. Ubiquitinated and degraded by the SCF(FBXO31) complex during the G2 phase to prevent re-replication. In terms of processing, phosphorylation by cyclin A-dependent kinases at Thr-28 targets CDT1 for ubiquitynation by SCF(SKP2) E3 ubiquitin ligase and subsequent degradation. Phosphorylated at Thr-28 by MAPK8/JNK1, which blocks replication licensing in response to stress. Binding to GMNN is not affected by phosphorylation.

The protein resides in the nucleus. It is found in the chromosome. Its subcellular location is the centromere. The protein localises to the kinetochore. Its function is as follows. Required for both DNA replication and mitosis. DNA replication licensing factor, required for pre-replication complex assembly. Cooperates with CDC6 and the origin recognition complex (ORC) during G1 phase of the cell cycle to promote the loading of the mini-chromosome maintenance (MCM) complex onto DNA to generate pre-replication complexes (pre-RC). Required also for mitosis by promoting stable kinetochore-microtubule attachments. Potential oncogene. The sequence is that of DNA replication factor Cdt1 from Mus musculus (Mouse).